Consider the following 975-residue polypeptide: MDLNSASSVVLQVLTQATSQDTAVLKPAEEQLKQWETQPGFYSVLLNIFTNHTLDINVRWLAVLYFKHGIDRYWRRVAPHALSEEEKSTLRAGLITNFNEPINQIATQIAVLIAKVARLDCPRQWPELIPTLVESVKVQDDLRQHRALLTFYHVTKTLASKRLAADRKLFYDLASGIYNFACSLWNHHTDTFLQHVSSGNEAAVLSSLERTLLSLKVLRKLTVNGFVEPHKNMEVMGFLHGIFERLKQFLECSRSIGTDNVCRDRLEKTIILFTKVLLDFLDQHPISFTPLIQRSLEFSVSYVFTEVGEGVTFERFIVQCMNLIKMIVKNYAYKPSKNFEDSSPETLEAHKIKMAFFTYPTLTEICRRLVSHYFLLTEEELTMWEEDPEGFTVEETGGDSWKYSLRPCTEVLFIDIFHEYNQTLTPVLLEMMQTLEGPTNVEDMNALLIKDAVYNAVGLAAFELFDSVDFDQWFKTQLLPELQVSHNRYKPLRRRVIWLIGQWISVKFKSDLRPMLYEAICNLLQDQDLVVRIETATTLKLTVDDFEFRTDQFLPYLETMFTLLFQLLQQVTECDTKMHVLHVLSCVIERVNVQIRPYVGCLVQYLPLLWKQSEEHNMLRCAILTTLIHLVQGLGADSKNLYPFLLPVIQLSTDVSQPPHVYLLEDGLELWLVTLENSPCVTPELLRIFQNMSPLLELSSENLRTCFKIINGYIFLSSTEFLQTYAAGLCQSFYELLPEITTEGQVQVLKVVENALKVNPVLGPQMFQRILPCVFRGVIEGERYPVVMSIYLAVMGRVLLQNTSFFSSLLNEMGHEFNQEMDQLLGNVIEMWVDRMDNITQPERKKLSALALLSLLPSDNSVIQDKFCGIINISVEALHDVMTEDPETRTYKDCMLMSQHEEPKVTEDEEPPTEQDKRKKMLALKDPVHTVSLQQFIYEKLKAQQEILGEQGFQSLMETVDTEIVTQLQEFLQGF.

Position 1 is an N-acetylmethionine (Met-1). Positions 28–100 (AEEQLKQWET…RAGLITNFNE (73 aa)) constitute an Importin N-terminal domain. HEAT repeat units lie at residues 123–160 (RQWP…TLAS), 283–317 (QHPI…ERFI), 318–356 (VQCM…KMAF), 422–459 (QTLT…AVGL), 473–509 (WFKT…VKFK), 511–548 (DLRP…DFEF), 555–593 (PYLE…RVNV), 600–636 (GCLV…GLGA), 640–677 (NLYP…TLEN), 683–720 (PELL…SSTE), 731–773 (QSFY…ILPC), 819–849 (QEMD…KLSA), 850–887 (LALL…EDPE), and 957–974 (METV…FLQG). Position 343 is a phosphoserine (Ser-343).

The protein belongs to the importin beta family. In terms of assembly, interacts with UBE2E3 and RPL12.

It localises to the cytoplasm. It is found in the nucleus. Functionally, functions in nuclear protein import as nuclear transport receptor. Serves as receptor for nuclear localization signals (NLS) in cargo substrates. Is thought to mediate docking of the importin/substrate complex to the nuclear pore complex (NPC) through binding to nucleoporin and the complex is subsequently translocated through the pore by an energy requiring, Ran-dependent mechanism. At the nucleoplasmic side of the NPC, Ran binds to the importin, the importin/substrate complex dissociates and importin is re-exported from the nucleus to the cytoplasm where GTP hydrolysis releases Ran. The directionality of nuclear import is thought to be conferred by an asymmetric distribution of the GTP- and GDP-bound forms of Ran between the cytoplasm and nucleus. Mediates the nuclear import of RPL12, and of UBE2E3. This Mus musculus (Mouse) protein is Importin-11 (Ipo11).